The following is a 432-amino-acid chain: Neuronal pentraxin-1 (432 aa).

The first 22 residues, 1–22 (MPAGRAARTCALLALCLLGAGA), serve as a signal peptide directing secretion. The tract at residues 90-122 (ESQSTLDPGAGEARAGGGRKQPGSGKNTMGDLS) is disordered. 2 N-linked (GlcNAc...) asparagine glycosylation sites follow: Asn154 and Asn193. The Pentraxin (PTX) domain maps to 226–428 (DKFQLTFPLR…GATKWTFEAC (203 aa)). Cys256 and Cys316 are oxidised to a cystine. Residues Asn280, Glu358, Gln359, Asp360, and Gln370 each contribute to the Ca(2+) site.

As to quaternary structure, homooligomer or heterooligomer (probably pentamer) with neuronal pentraxin receptor (NPTXR). The cofactor is Ca(2+).

Its subcellular location is the secreted. It is found in the cytoplasmic vesicle. The protein resides in the secretory vesicle. The protein localises to the endoplasmic reticulum. May be involved in mediating uptake of synaptic material during synapse remodeling or in mediating the synaptic clustering of AMPA glutamate receptors at a subset of excitatory synapses. The sequence is that of Neuronal pentraxin-1 (NPTX1) from Homo sapiens (Human).